Here is a 1102-residue protein sequence, read N- to C-terminus: Carbamoyl phosphate synthase large chain (1102 aa).

The carboxyphosphate synthetic domain stretch occupies residues 1–408 (MPKRTDIQSV…AFQKALRSLE (408 aa)). Residues R129, R175, G181, G182, E214, I216, E221, G247, V248, H249, Q291, and E305 each coordinate ATP. Residues 137-334 (EEVRKKIGHG…IAKIAAKLAV (198 aa)) enclose the ATP-grasp 1 domain. Mg(2+) contacts are provided by Q291, E305, and N307. Mn(2+) is bound by residues Q291, E305, and N307. The oligomerization domain stretch occupies residues 409–551 (KKGSQFTFVG…YFYSSYDEES (143 aa)). The interval 552–954 (EVAPREKPAV…AYAKSQAGAY (403 aa)) is carbamoyl phosphate synthetic domain. An ATP-grasp 2 domain is found at 682 to 873 (GRVLAEAGLP…LAKAAARISL (192 aa)). R718, R757, L759, E764, G789, I790, H791, S792, Q832, and E844 together coordinate ATP. Positions 832, 844, and 846 each coordinate Mg(2+). The Mn(2+) site is built by Q832, E844, and N846. The 146-residue stretch at 955–1100 (GPLPTKGRAF…QEHAAFLIAA (146 aa)) folds into the MGS-like domain. The interval 955-1102 (GPLPTKGRAF…HAAFLIAARD (148 aa)) is allosteric domain.

The protein belongs to the CarB family. In terms of assembly, composed of two chains; the small (or glutamine) chain promotes the hydrolysis of glutamine to ammonia, which is used by the large (or ammonia) chain to synthesize carbamoyl phosphate. Tetramer of heterodimers (alpha,beta)4. The cofactor is Mg(2+). Mn(2+) serves as cofactor.

It carries out the reaction hydrogencarbonate + L-glutamine + 2 ATP + H2O = carbamoyl phosphate + L-glutamate + 2 ADP + phosphate + 2 H(+). The catalysed reaction is hydrogencarbonate + NH4(+) + 2 ATP = carbamoyl phosphate + 2 ADP + phosphate + 2 H(+). It participates in amino-acid biosynthesis; L-arginine biosynthesis; carbamoyl phosphate from bicarbonate: step 1/1. The protein operates within pyrimidine metabolism; UMP biosynthesis via de novo pathway; (S)-dihydroorotate from bicarbonate: step 1/3. In terms of biological role, large subunit of the glutamine-dependent carbamoyl phosphate synthetase (CPSase). CPSase catalyzes the formation of carbamoyl phosphate from the ammonia moiety of glutamine, carbonate, and phosphate donated by ATP, constituting the first step of 2 biosynthetic pathways, one leading to arginine and/or urea and the other to pyrimidine nucleotides. The large subunit (synthetase) binds the substrates ammonia (free or transferred from glutamine from the small subunit), hydrogencarbonate and ATP and carries out an ATP-coupled ligase reaction, activating hydrogencarbonate by forming carboxy phosphate which reacts with ammonia to form carbamoyl phosphate. The sequence is that of Carbamoyl phosphate synthase large chain from Streptomyces coelicolor (strain ATCC BAA-471 / A3(2) / M145).